We begin with the raw amino-acid sequence, 200 residues long: MRPLPSGRRKTRGISLGLFALCLAAARCLQSQGVSLYIPQATINATVKEDILLSVEYSCHGVPTIEWTYSSNWGTQKIVEWKPGTQANISQSHKDRVCTFDNGSIQLFSVGVRDSGYYVITVTERLGSSQFGTIVLHVSEILYEDLHFVAVILAFLAAVAAVLISLMWVCNKCAYKFQRKRRHKLKESTTEEIELEDVEC.

The N-terminal stretch at 1–28 (MRPLPSGRRKTRGISLGLFALCLAAARC) is a signal peptide. The Extracellular segment spans residues 29 to 147 (LQSQGVSLYI…VSEILYEDLH (119 aa)). Residues 37 to 139 (YIPQATINAT…QFGTIVLHVS (103 aa)) enclose the Ig-like C2-type domain. N-linked (GlcNAc...) asparagine glycosylation is present at asparagine 102. The chain crosses the membrane as a helical span at residues 148-168 (FVAVILAFLAAVAAVLISLMW). The Cytoplasmic portion of the chain corresponds to 169–200 (VCNKCAYKFQRKRRHKLKESTTEEIELEDVEC). An important for CDC42-dependent filopodia induction region spans residues 170-186 (CNKCAYKFQRKRRHKLK).

In terms of assembly, can homooligomerize through cis interactions within the same cell membrane. In terms of processing, N-glycosylated.

Its subcellular location is the cell membrane. It is found in the cell projection. The protein resides in the dendrite. The protein localises to the axon. Cell adhesion-like membrane protein of the central nervous system (CNS) which modulates both the position and complexity of central neurons by altering their membrane morphology and dynamics. Involved in the formation of neuronal dendrites and protrusions including dendritic filopodia. In synaptogenesis, regulates synapse formation by altering dendritic spine morphology and actin distribution. Promotes formation of unstable neuronal spines such as thin and branched types. Regulates neuronal morphogenesis and migration during cortical development in the brain. The polypeptide is V-set and transmembrane domain-containing protein 5 (VSTM5) (Homo sapiens (Human)).